The chain runs to 246 residues: Probable transcriptional regulatory protein WP1214 (246 aa).

Residues 1–22 are disordered; that stretch reads MAGHSQFSNIKHRKGAQDAKRS.

This sequence belongs to the TACO1 family.

The protein resides in the cytoplasm. The protein is Probable transcriptional regulatory protein WP1214 of Wolbachia pipientis subsp. Culex pipiens (strain wPip).